Here is a 258-residue protein sequence, read N- to C-terminus: Protein SseB (258 aa).

Functionally, may be involved in the enhancement of serine-sensitivity. This is Protein SseB (sseB) from Escherichia coli (strain K12).